Consider the following 90-residue polypeptide: Transcriptional repressor SdpR (90 aa).

In terms of domain architecture, HTH arsR-type spans 1-87; sequence MNNVFKAISD…WMLNFINKGD (87 aa). Residues 39-62 constitute a DNA-binding region (H-T-H motif); it reads PSISHHLNILKQAEVISDHRKGQF.

Its subcellular location is the cytoplasm. Functionally, represses the transcription of the sdpIR operon and of several other operons that probably contribute to delaying commitment to sporulation. The chain is Transcriptional repressor SdpR (sdpR) from Bacillus subtilis (strain 168).